The following is an 825-amino-acid chain: MPTPATIKSYQDIKANIEGACQRIAPLWPLKHFVAVNPYVGLRDQPFWRADQTLRKITGKGLTMPRPYYEEQIANGRIIQEDLDEALKQMHSNWSVTQLKQVMKQRSASRNVPFPVFADAMFADDRRDWPGFVVERISQYCAAYFDEGQATWSMPWRDDPMYQAWLKFMHFDKSPRMVGLRGIGEAAAALPAAAETAIALALKELSVPFDLIDDYLFAALLSIGGWAGWARYLRWQAELKGETDQSLRDLLAIRVCWDAILHKTCADIAVRKQWHLMLHTQQNRAIEKPSEHVDAILQTALEIGYQRSLIKSLKEASRPSNTVIERPVAQAAFCIDVRSEIIRRALETVAPGIQTLGFAGFFGVLMEYVPFGSNAPKGHLPVIFNPPYRVCEDLSHASEDETQRHAAKRQLRLRVATAWKSFKTSAVSTFTFVEATGLLYAPKLFGDSMGWTRTVPHPDERGLDSGTKQRLRPRLIASGNGKSSAKSTGIPETERAGVGEFILKNMGLTQTFARLILLAGHGSTTVNNPQGTGLDCGACAGQTGEASARIAVTLLNDPATRRGLEEKGLKIPKDTYFIAGLHDTTTDEVTIFDTEDLPTTHAKDLAQLRQWLADAGELTRLERATLLGTASQAPEVVTRDMRRRTRDWAEVRPEWALAGNAAFIAAPRQRTRGVDLEGRAFLHDYDWHKDAGFSTLELIMTAPMVVANWINMQYYGSMVDNLRFGSGNKVLHNVVGGSIGVLEGNGGDLRVGFALQSLHDGKRWIHEPVRLNVVIEAPQAEMESIISRHILVRELVDNGWLYLFQIDDDGSVYRRVCDKQWPRMT.

Zn(2+)-binding residues include cysteine 334, aspartate 336, histidine 521, and cysteine 536.

It belongs to the inorganic carbon transporter (TC 9.A.2) DabA family. In terms of assembly, forms a complex with DabB. Zn(2+) serves as cofactor.

The protein localises to the cell inner membrane. Its function is as follows. Part of an energy-coupled inorganic carbon pump. The chain is Probable inorganic carbon transporter subunit DabA from Acidithiobacillus ferrooxidans (strain ATCC 23270 / DSM 14882 / CIP 104768 / NCIMB 8455) (Ferrobacillus ferrooxidans (strain ATCC 23270)).